The sequence spans 341 residues: D-aspartate oxidase (341 aa).

Residues Asp-36, Lys-37, Thr-43, Ser-44, Met-50, Gly-307, and Ile-311 each coordinate FAD. A Microbody targeting signal motif is present at residues 339-341; the sequence is SKL.

The protein belongs to the DAMOX/DASOX family. Homotetramer. Interacts with PEX5; the interaction is direct and required for localization of DDO to the peroxisome. FAD is required as a cofactor. As to expression, expressed in epithelial cells of the renal proximal tubules (not detected in the glomeruli or renal distal tubules), liver, right atrium of heart, lung, chief cells of the gastric mucosa, choroid plexus, pia mater, brain stem, midbrain, pons, medulla oblongata, hypothalamus, hippocampus, cerebral cortex, cerebellum, ependyma, olfactory bulb and the pituitary, pineal, thyroid and adrenal glands (at protein level).

The protein resides in the peroxisome matrix. The protein localises to the cytoplasm. It is found in the cytosol. It carries out the reaction D-aspartate + O2 + H2O = oxaloacetate + H2O2 + NH4(+). The catalysed reaction is D-glutamate + O2 + H2O = H2O2 + 2-oxoglutarate + NH4(+). Functionally, selectively catalyzes the oxidative deamination of acidic amino acids. Suppresses the level of D-aspartate in the brain, an amino acid that can act as an agonist for glutamate receptors. Protects the organism from the toxicity of D-amino acids. May also function in the intestine. In Sus scrofa (Pig), this protein is D-aspartate oxidase (DDO).